Here is a 631-residue protein sequence, read N- to C-terminus: Probable electron transfer flavoprotein-ubiquinone oxidoreductase, mitochondrial (631 aa).

65 to 79 (VCIVGGGPAGLATAI) serves as a coordination point for FAD. Residues cysteine 574, cysteine 600, cysteine 603, and cysteine 606 each coordinate [4Fe-4S] cluster. Residues 591 to 620 (TRLQINSQNCIHCKTCDIKAPRQDITWKVP) form the 4Fe-4S ferredoxin-type domain.

It belongs to the ETF-QO/FixC family. [4Fe-4S] cluster serves as cofactor. Requires FAD as cofactor.

It is found in the mitochondrion inner membrane. The catalysed reaction is a ubiquinone + reduced [electron-transfer flavoprotein] = a ubiquinol + oxidized [electron-transfer flavoprotein] + H(+). Its function is as follows. Accepts electrons from ETF and reduces ubiquinone. In Saccharomyces cerevisiae (strain ATCC 204508 / S288c) (Baker's yeast), this protein is Probable electron transfer flavoprotein-ubiquinone oxidoreductase, mitochondrial (CIR2).